Here is a 444-residue protein sequence, read N- to C-terminus: Mitogen-activated protein kinase mpk-1 (444 aa).

Composition is skewed to polar residues over residues 1–17 and 24–56; these read MPTWIPNNLCAQPTTRN and GHPQATQQQSAPGSLAYRNSSNIPNGATNHVRQ. The segment at 1–56 is disordered; the sequence is MPTWIPNNLCAQPTTRNAKPPSNGHPQATQQQSAPGSLAYRNSSNIPNGATNHVRQ. One can recognise a Protein kinase domain in the interval 96–384; it reads YVNLSYIGEG…IEQALAHPYL (289 aa). Residues 102 to 110 and Lys-125 contribute to the ATP site; that span reads IGEGAYGMV. The active-site Proton acceptor is Asp-220. Residue Thr-256 is modified to Phosphothreonine. Positions 256–258 match the TXY motif; that stretch reads TEY. The residue at position 258 (Tyr-258) is a Phosphotyrosine.

Belongs to the protein kinase superfamily. CMGC Ser/Thr protein kinase family. MAP kinase subfamily. As to quaternary structure, isoform a interacts with gck-1 (via N-terminus). The cofactor is Mg(2+). Post-translationally, isoform a is phosphorylated at the pachytene stage during oogenesis and is negatively regulated by gck-1. Isoform b is phosphorylated in proximal oocytes. In terms of tissue distribution, expressed in cells lining the rectum. Isoform a is expressed in nervous system, body wall muscles and posterior intestine. Isoform b expression may be restricted to germline.

It carries out the reaction L-seryl-[protein] + ATP = O-phospho-L-seryl-[protein] + ADP + H(+). The catalysed reaction is L-threonyl-[protein] + ATP = O-phospho-L-threonyl-[protein] + ADP + H(+). With respect to regulation, activated by dual phosphorylation at Thr-256 and Tyr-258. May be inactivated by lip-1-mediated dephosphorylation. Functionally, functions in let-60 Ras signaling pathway; acts downstream of lin-45 raf kinase, but before the lin-1 gene product in controlling vulval cell differentiation. Plays a negative role in proximal germline proliferation in the mitotic zone. Required for progression of developing oocytes through the pachytene stage, perhaps acting after efl-1/dpl-1-mediated gene activation and before gld-1 down-regulation. May play a role in global X chromosome reactivation or be indirectly required for progression of germ cells through meiosis to the point where X reactivation occurs. In oocytes, inhibits the activity of the chloride channel clh-3, likely by activating gck-3. Plays a role in response to M.nematophilum-mediated bacterial infection by promoting tail swelling and preventing constipation. Involved in fluid homeostasis. In addition, involved in the up-regulation of lysozyme ilys-3 expression in the intestine in responses to M.nematophilum-mediated bacterial infection. By phosphorylating transcription factor skn-1 (isoform c) may play a role in increasing life span downstream of lin-45, let-60 and mek-2. By up-regulating cep-1 and down-regulating gld-1 expression in the late pachytene stage, plays a role in germline apoptosis in response to DNA damage. Regulates egl-1 expression in response to DNA damage, probably upstream of cep-1. Suppresses germline tumor formation by preventing the dedifferentiation of secondary spermatocytes probably upstream of rskn-1. The protein is Mitogen-activated protein kinase mpk-1 (mpk-1) of Caenorhabditis elegans.